Consider the following 122-residue polypeptide: Large ribosomal subunit protein bL17 (122 aa).

This sequence belongs to the bacterial ribosomal protein bL17 family. Part of the 50S ribosomal subunit. Contacts protein L32.

This chain is Large ribosomal subunit protein bL17, found in Staphylococcus carnosus (strain TM300).